The chain runs to 496 residues: MVSQTAAAAAPADPIVDVEMESAEDAEAAKKDAELLAVQEIRDHARQIDKAVVSKEPRFILRVLRSLPTTRRKLALVVVRSLAVQLYPAGPERDGIMAYIEDYPAGAQEPELPRPRAAIKSPVPEVDAYFHLLLLVRLLDKNDLPKATKCSQDLMAKVVGQNRRSLDLIAAKSYFYHSRVAELNNDLESIRSFLHSRLRTATLRNDFEGQAVLINCLLRNYLHYSLYDQADKLVNKSVFPETASNNECARFLYYLGRIKAAKLEYSVAHKQLVQALRKAPQQAAVGFRQTVQKLVIVVELLLGDIPERKVFRQAALRRSLGPYFQLTQAVRMGNLQRFGEVLVNFGEQFRQDHTFTLIIRLRHNVIKTAIRSIGLAYSRISPQDIARKLGLDSPEDAEFIVAKAIRDGVIEATLDPEKGYMRSKESTDIYSTREPQLAFHQRISFCLDLHNQSVKAMRYPPKSYGKELESAEERREREQQDLELAKEMAEEDDDGF.

One can recognise a PCI domain in the interval 249–428 (ARFLYYLGRI…GYMRSKESTD (180 aa)). The segment at 458–480 (RYPPKSYGKELESAEERREREQQ) is disordered. Residues 464-480 (YGKELESAEERREREQQ) are compositionally biased toward basic and acidic residues.

Belongs to the proteasome subunit S3 family. In terms of assembly, the 26S proteasome is composed of a core protease, known as the 20S proteasome, capped at one or both ends by the 19S regulatory complex (RC). The RC is composed of at least 18 different subunits in two subcomplexes, the base and the lid, which form the portions proximal and distal to the 20S proteolytic core, respectively.

Functionally, acts as a regulatory subunit of the 26 proteasome which is involved in the ATP-dependent degradation of ubiquitinated proteins. The chain is Probable 26S proteasome non-ATPase regulatory subunit 3 (Dox-A2) from Anopheles gambiae (African malaria mosquito).